A 296-amino-acid chain; its full sequence is uncharacterized protein (296 aa).

Residues 1–95 form the FAD-binding FR-type domain; the sequence is MYKIVSKKEL…VGPLGVPSEF (95 aa).

This is an uncharacterized protein from Clostridium beijerinckii (Clostridium MP).